A 404-amino-acid polypeptide reads, in one-letter code: MKKIYDLWVRVSLIKKIGIGVVIGVMLGILAPDLTGFSILGKLFVGGLKAIAPLLVFALVSQAISHQKKGRQTNMTLIIFLYLFGTFASALVAVLTAYLFPLTLVLNTPVNTELSPPQGVAEVFQSLLLKLVDNPINALATANYIGVLSWAIIFGLALKAASQETKHLIKTAAEVTSQIVVWIINLAPIGIMSLVFTTISENGVGILSDYAFLILVLVGTMVFVALVVNPLIAVLITRQNPYPLVLRCLRESGLTAFFTRSSAANIPVNMQLCQKIGLSKDTYSVSIPLGATINMGGAAITINVLTLAAVHTFGIPIDFLTALLLSVVAAVSACGASGVAGGSLLLIPVACSLFGISNDLAMQVVGVGFIVGVIQDSCETALNSSTDVLFTAIAENAFWKRKKA.

Helical transmembrane passes span 17–37 (IGIGVVIGVMLGILAPDLTGF), 39–59 (ILGKLFVGGLKAIAPLLVFAL), 75–95 (MTLIIFLYLFGTFASALVAVL), 138–158 (ALATANYIGVLSWAIIFGLAL), 179–199 (IVVWIINLAPIGIMSLVFTTI), 212–232 (FLILVLVGTMVFVALVVNPLI), 287–307 (IPLGATINMGGAAITINVLTL), and 313–333 (FGIPIDFLTALLLSVVAAVSA).

It belongs to the dicarboxylate/amino acid:cation symporter (DAACS) (TC 2.A.23) family.

Its subcellular location is the cell membrane. The enzyme catalyses L-serine(in) + Na(+)(in) = L-serine(out) + Na(+)(out). It carries out the reaction L-threonine(in) + Na(+)(in) = L-threonine(out) + Na(+)(out). In terms of biological role, involved in the import of serine and threonine into the cell, with the concomitant import of sodium (symport system). The chain is Serine/threonine transporter SstT from Streptococcus pyogenes serotype M5 (strain Manfredo).